The primary structure comprises 68 residues: Putative protein YfaH (68 aa).

In Escherichia coli (strain K12), this protein is Putative protein YfaH (yfaH).